Reading from the N-terminus, the 673-residue chain is MESFIVYSVLAGVIALIFAFMLSSFISKESAGNERMQEIAGHIHDGAMAFLKTEYKYLTGFIVIVTVILAIFVGWQTAACFILGAIFSIFAGYFGMNVATKANVRTAEAARHSQGKALNIAFSGGAVMGMSVVGLGVVGIGIMYYIFGGNMEFVTGFGLGASSIALFARVGGGIYTKAADVGADLVGKVEAGIPEDDPRNPAVIADNVGDNVGDVAGMGADLFESYVGSIISALTLGTVVYANKEGVMFPLILSSIGIVASIIGILFSRKSKAKDPQKALNTGTYIGGIIVIVSAAILSNTIFGNLKAFFAVASGLVVGMIIGKITEMYTSDAYSSVQKIANQSETGPATTIISGLAVGMYSTLWPIVLISIGVLVSFFVMGGGSNAMVGLYGISLAAVGMLSTTGLTVAVDAYGPIADNAGGIAEMSELPHEVREITDKLDSVGNTTAAIGKGFAIGSAALTALSLFASYAQATELESIDILNTVTLVGLFIGAMLPFLFGALTMESVGKAANEMIEEVRRQFKTIPGIMEGKATPDYKKCVDISTAAAIREMILPGVLAIVVPVAMGLLLGKEALGGLLAGALVSGVLVGILMSNAGGAWDNAKKYIEGGAHGGKGSEAHKAAVVGDTVGDPFKDTSGPSMNILIKLMTIVSLVFAPVVLQYGGILLNLIK.

5 helical membrane passes run 3 to 23 (SFIV…FMLS), 62 to 82 (IVIV…ACFI), 84 to 104 (GAIF…KANV), 127 to 147 (VMGM…YYIF), and 154 to 174 (VTGF…GGGI). K177 is a substrate binding site. 4 residues coordinate Mg(2+): D180, D184, N207, and D210. The next 6 membrane-spanning stretches (helical) occupy residues 222-242 (LFES…VVYA), 247-267 (VMFP…GILF), 279-299 (ALNT…AILS), 302-322 (IFGN…GMII), 364-384 (LWPI…MGGG), and 387-407 (AMVG…TTGL). D419 provides a ligand contact to Mg(2+). Helical transmembrane passes span 449 to 469 (AAIG…SLFA), 486 to 506 (VTLV…ALTM), 553 to 573 (EMIL…LLLG), and 576 to 596 (ALGG…ILMS). Residues D603, D629, and D633 each coordinate Ca(2+). K636 is a substrate binding site. A helical transmembrane segment spans residues 652-672 (IVSLVFAPVVLQYGGILLNLI).

Belongs to the H(+)-translocating pyrophosphatase (TC 3.A.10) family. K(+)-stimulated subfamily. In terms of assembly, homodimer. Mg(2+) serves as cofactor.

It localises to the cell membrane. It carries out the reaction Na(+)(in) + diphosphate + H2O = Na(+)(out) + 2 phosphate + H(+). Requires K(+) for maximal activity. Sodium pump that utilizes the energy of pyrophosphate hydrolysis as the driving force for Na(+) movement across the membrane. The chain is Putative K(+)-stimulated pyrophosphate-energized sodium pump from Clostridium tetani (strain Massachusetts / E88).